A 120-amino-acid chain; its full sequence is Large ribosomal subunit protein uL18 (120 aa).

Belongs to the universal ribosomal protein uL18 family. As to quaternary structure, part of the 50S ribosomal subunit; part of the 5S rRNA/L5/L18/L25 subcomplex. Contacts the 5S and 23S rRNAs.

In terms of biological role, this is one of the proteins that bind and probably mediate the attachment of the 5S RNA into the large ribosomal subunit, where it forms part of the central protuberance. In Finegoldia magna (strain ATCC 29328 / DSM 20472 / WAL 2508) (Peptostreptococcus magnus), this protein is Large ribosomal subunit protein uL18.